The sequence spans 828 residues: Potassium channel SKOR (828 aa).

The Cytoplasmic portion of the chain corresponds to 1–86; the sequence is MGGSSGGGVS…PDNRWYKAWT (86 aa). A helical transmembrane segment spans residues 87 to 107; it reads MFILIWALYSSFFTPLEFGFF. The Extracellular segment spans residues 108–114; the sequence is RGLPENL. A helical transmembrane segment spans residues 115–135; the sequence is FILDIAGQIAFLVDIVLTFFV. Residues 136 to 158 lie on the Cytoplasmic side of the membrane; it reads AYRDSRTYRMIYKRSSIALRYLK. The chain crosses the membrane as a helical span at residues 159 to 179; that stretch reads STFIIDLLACMPWDIIYKAAG. At 180–185 the chain is on the extracellular side; that stretch reads EKEEVR. The chain crosses the membrane as a helical; Voltage-sensor span at residues 186–206; that stretch reads YLLLIRLYRVHRVILFFHKME. The Cytoplasmic portion of the chain corresponds to 207–220; the sequence is KDIRINYLFTRIVK. A helical transmembrane segment spans residues 221 to 241; it reads LIFVELYCTHTAACIFYYLAT. At 242-276 the chain is on the extracellular side; that stretch reads TLPASQEGYTWIGSLKLGDYSYSKFREIDLWTRYT. Residues 277 to 296 constitute an intramembrane region (pore-forming); it reads TSMYFAVVTMATVGYGDIHA. Residues 297 to 300 are Extracellular-facing; the sequence is VNMR. The helical transmembrane segment at 301-321 threads the bilayer; the sequence is EMIFAMVYISFDMILGAYLIG. The Cytoplasmic portion of the chain corresponds to 322-828; the sequence is NMTALIVKGS…GQKLYLAVET (507 aa). 403 to 523 contacts a nucleoside 3',5'-cyclic phosphate; that stretch reads LFRGCSSEFI…RRILNNLLEG (121 aa). 6 ANK repeats span residues 545-576, 580-609, 613-642, 644-673, 677-706, and 710-740; these read EAEL…DPNK, DGRS…DVNI, LGST…TLNI, NAGT…DPNS, DHRT…NVLA, and WGNT…QISS. The KHA domain maps to 756–828; sequence KCTVYFSHPG…GQKLYLAVET (73 aa).

It belongs to the potassium channel family. Plant (TC 1.A.1.4) subfamily. In terms of assembly, the potassium channel is probably composed of a homo- or heterotetrameric complex of pore-forming subunits. As to expression, expressed in root pericycle and xylem parenchyma, and in flower at a lower level.

It is found in the membrane. Highly selective outward-rectifying potassium channel. Involved in potassium release into the xylem sap toward the shoots. Assuming opened or closed conformations in response to the voltage difference across the membrane, the channel is activated by depolarization. The voltage-dependence of the channel is abolished by internal or external acidification. May interact with the cytoskeleton or with regulatory proteins. This chain is Potassium channel SKOR (SKOR), found in Arabidopsis thaliana (Mouse-ear cress).